The sequence spans 124 residues: Small ribosomal subunit protein bS6 (124 aa).

Belongs to the bacterial ribosomal protein bS6 family.

In terms of biological role, binds together with bS18 to 16S ribosomal RNA. In Campylobacter lari (strain RM2100 / D67 / ATCC BAA-1060), this protein is Small ribosomal subunit protein bS6.